The sequence spans 130 residues: Small ribosomal subunit protein eS17 (130 aa).

Residues Q74–Y84 show a composition bias toward basic and acidic residues. The disordered stretch occupies residues Q74 to T97.

Belongs to the eukaryotic ribosomal protein eS17 family.

This is Small ribosomal subunit protein eS17 (rps-17) from Caenorhabditis elegans.